We begin with the raw amino-acid sequence, 179 residues long: RNA pyrophosphohydrolase (179 aa).

The Nudix hydrolase domain occupies G6 to K149. The Nudix box motif lies at G38–G59.

Belongs to the Nudix hydrolase family. RppH subfamily. The cofactor is a divalent metal cation.

Accelerates the degradation of transcripts by removing pyrophosphate from the 5'-end of triphosphorylated RNA, leading to a more labile monophosphorylated state that can stimulate subsequent ribonuclease cleavage. The protein is RNA pyrophosphohydrolase of Ruthia magnifica subsp. Calyptogena magnifica.